A 635-amino-acid chain; its full sequence is MIRVICDNETFELPTGSTAADFASKIKNSHYFAGVVINDQIKDLSTTLSEGDVLKFVTFTDPEGREIFLHTSAHMLAQAVLRLWPQAIPTIGPVIDLGFYYDFANLSISEDDFPAIENMVEQIAKERFEISKKTFNDKQEALQEFASNPFKVELIQEFPEDENITCYSQGEFMDLCRGPHLPSTAPVKAFKLLRTSAAYWRGDPSRESLVRIYGVSFPTTKELKEHLHQLEEAKKRDHRVLGTKLDLFSQQECSAGMPFFHPRGMIIWDALIGYWKRLHQLAGYKEILTPQLVNRSLWEVSGHWSNYKENMYTLKIDEEDYAIKPMNCPGCMLYYKTRLHSYKEFPLRIAEIGHVHRYEISGALSGLMRVRAFHQDDAHVFLTPEQVEEETLNILNLVSELYSTFGLEYHLELSTRPEKATIGSDELWDLATAALERALINSNTPFVINPGDGAFYGPKIDIHVKDAIQRTWQCGTIQLDMFLPERFELEYTNAQGEKSTPIMLHRALFGSIERFLGILIEHFKGRFPLWLSPEHVRLITVADRHQPRAQELATAWQQLGFVVTVDDSNESVSKKIRNAQNMQVNYMVTLGDREIEENTLAVRTRDNRVLNNMTIDTFINTILEEKNSLSLTPLL.

A TGS domain is found at 1–58 (MIRVICDNETFELPTGSTAADFASKIKNSHYFAGVVINDQIKDLSTTLSEGDVLKFVT). Residues 237 to 528 (DHRVLGTKLD…LIEHFKGRFP (292 aa)) are catalytic. Residues Cys-328, His-379, and His-505 each contribute to the Zn(2+) site.

This sequence belongs to the class-II aminoacyl-tRNA synthetase family. As to quaternary structure, homodimer. It depends on Zn(2+) as a cofactor.

The protein localises to the cytoplasm. It carries out the reaction tRNA(Thr) + L-threonine + ATP = L-threonyl-tRNA(Thr) + AMP + diphosphate + H(+). In terms of biological role, catalyzes the attachment of threonine to tRNA(Thr) in a two-step reaction: L-threonine is first activated by ATP to form Thr-AMP and then transferred to the acceptor end of tRNA(Thr). Also edits incorrectly charged L-seryl-tRNA(Thr). The polypeptide is Threonine--tRNA ligase (Chlamydia felis (strain Fe/C-56) (Chlamydophila felis)).